We begin with the raw amino-acid sequence, 227 residues long: Lipoprotein-releasing system ATP-binding protein LolD (227 aa).

Residues 6 to 227 (LVLDDIQKSY…RLDEGVLVSA (222 aa)) form the ABC transporter domain. ATP is bound at residue 43–50 (APSGAGKS).

The protein belongs to the ABC transporter superfamily. Lipoprotein translocase (TC 3.A.1.125) family. As to quaternary structure, the complex is composed of two ATP-binding proteins (LolD) and two transmembrane proteins (LolC and LolE).

It is found in the cell inner membrane. Part of the ABC transporter complex LolCDE involved in the translocation of mature outer membrane-directed lipoproteins, from the inner membrane to the periplasmic chaperone, LolA. Responsible for the formation of the LolA-lipoprotein complex in an ATP-dependent manner. This Jannaschia sp. (strain CCS1) protein is Lipoprotein-releasing system ATP-binding protein LolD.